A 589-amino-acid chain; its full sequence is Transcription factor MYC4 (589 aa).

Positions 99 to 150 (NTVLLGWGDGYYKGEEEKSRKKKSNPASAAEQEHRKRVIRELNSLISGGVGG) are JAZ-interaction domain. Disordered regions lie at residues 114 to 133 (EEKS…QEHR), 291 to 326 (AAPV…PNPK), 340 to 359 (IENG…VSNN), and 381 to 422 (ASVA…EAER). Residues 296 to 308 (NNGGNDSTSNSDS) show a composition bias toward low complexity. Over residues 309–322 (QPISKLCNGSSVEN) the composition is skewed to polar residues. A compositionally biased stretch (basic and acidic residues) spans 381 to 398 (ASVAKEAESNRVVVEPEK). Over residues 399-408 (KPRKRGRKPA) the composition is skewed to basic residues. The span at 409 to 422 (NGREEPLNHVEAER) shows a compositional bias: basic and acidic residues. A bHLH domain is found at 412–461 (EEPLNHVEAERQRREKLNQRFYSLRAVVPNVSKMDKASLLGDAISYISEL).

As to quaternary structure, homo- and heterodimer. Interacts with MYB28, MYB29, MYB34, MYB51, MYB76, MYB122, MYC3, AFPH2/NINJA and the JAZ repressors TIFY10A/JAZ1, TIFY10B/JAZ2, TIFY6B/JAZ3, TIFY6A/JAZ4, TIFY11A/JAZ5, TIFY11B/JAZ6, TIFY5B/JAZ7, TIFY5A/JAZ8, TIFY7/JAZ9, TIFY9/JAZ10, TIFY3A/JAZ11 and TIFY3B/JAZ12. As to expression, expressed constitutively at low levels. Preferentially expressed in vascular tissues.

The protein resides in the nucleus. In terms of biological role, transcription factor involved in jasmonic acid (JA) gene regulation. With MYC2 and MYC3, controls additively subsets of JA-dependent responses. Can form complexes with all known glucosinolate-related MYBs to regulate glucosinolate biosynthesis. Binds to the G-box (5'-CACGTG-3') of promoters. Activates multiple TIFY/JAZ promoters. The sequence is that of Transcription factor MYC4 (MYC4) from Arabidopsis thaliana (Mouse-ear cress).